The primary structure comprises 631 residues: Leukocyte immunoglobulin-like receptor subfamily B member 3 (631 aa).

Positions 1 to 23 (MTPALTALLCLGLSLGPRTRVQA) are cleaved as a signal peptide. Residues 24-443 (GPFPKPTLWA…STPGLGRYLE (420 aa)) lie on the Extracellular side of the membrane. 4 consecutive Ig-like C2-type domains span residues 42 to 100 (GSPV…RCHY), 111 to 229 (DPLE…SLLT), 225 to 314 (PSLL…DPLN), and 338 to 419 (GENV…LVVS). Cysteine 49 and cysteine 98 are oxidised to a cystine. Residues 59–70 (RLHKEGSPEPLD) show a composition bias toward basic and acidic residues. The disordered stretch occupies residues 59–78 (RLHKEGSPEPLDRNNPLEPK). Asparagine 139 carries an N-linked (GlcNAc...) asparagine glycan. Intrachain disulfides connect cysteine 144–cysteine 196 and cysteine 245–cysteine 296. 3 N-linked (GlcNAc...) asparagine glycosylation sites follow: asparagine 280, asparagine 301, and asparagine 340. Cysteine 345 and cysteine 396 form a disulfide bridge. Residues 444–464 (VLIGVSVAFVLLLFLLLFLLL) traverse the membrane as a helical segment. Residues 465-631 (RRQRHSKHRT…PSIYATLAIH (167 aa)) are Cytoplasmic-facing. The disordered stretch occupies residues 470-631 (SKHRTSDQRK…PSIYATLAIH (162 aa)). Over residues 473 to 482 (RTSDQRKTDF) the composition is skewed to basic and acidic residues. Positions 512-517 (NLYAAV) match the ITIM motif 1 motif. 2 stretches are compositionally biased toward basic and acidic residues: residues 520–537 (TQSE…HDED) and 567–581 (LDTK…RQMD). Polar residues predominate over residues 588-600 (EASQDVTYAQLHS). 2 short sequence motifs (ITIM motif) span residues 593–598 (VTYAQL) and 623–628 (SIYATL). Residues tyrosine 595 and tyrosine 625 each carry the phosphotyrosine; by LYN modification.

As to quaternary structure, interacts with LYN, PTPN6/SHP-1 and PTPN11/SHP-2. Post-translationally, phosphorylated on tyrosine residues by LYN. Phosphorylation at Tyr-595 and Tyr-625 is important for interaction with PTPN6/SHP-1 and PTPN11/SHP-2. Detected in monocytes and B-cells.

It localises to the cell membrane. Its function is as follows. May act as receptor for class I MHC antigens. Becomes activated upon coligation of LILRB3 and immune receptors, such as FCGR2B and the B-cell receptor. Down-regulates antigen-induced B-cell activation by recruiting phosphatases to its immunoreceptor tyrosine-based inhibitor motifs (ITIM). This is Leukocyte immunoglobulin-like receptor subfamily B member 3 (LILRB3) from Homo sapiens (Human).